The sequence spans 877 residues: MATVGVLLLCLCLCLFAPRLCSSKEEGPLAARTVLAVAVTMEGALRAEAATGGRSSTGDVQRLAVYASLETDSRLRVRITDADHPRWEVPQDIIPRPAPGDVLHDAPPASSAPLQGRVLSPAGSDLVLTVHASPFRFTVSRRSTGDTLFDTAPGLVFRDKYLEVTSALPAGRASLYGLGEHTKSSFRLRHNDSFTLWNADIGASYVDVNLYGSHPFYMDVRAPGTAHGVLLLSSNGMDVLYGGSYVTYKVIGGVLDFYFFAGPNPLAVVDQYTQLIARPAPMPYWSFGFHQCRYGYLNVSDLERVVARYAKARIPLEVMWTDIDYMDGFKDFTLDRVNFTAAELRPFVDRLHRNAQKYVLILDPGIRVDPIDATYGTFVRGMQQDIFLKRNGTNFVGNVWPGDVYFPDFMHPAAAEFWAREISLFRRTIPVDGLWIDMNEISNFYNPEPMNALDDPPYRINNDGTGRPINNKTVRPLAVHYGGVTEYEEHNLFGLLEARATGRGVLRDTGRRPFVLSRSTFVGSGRYTAYWTGDNAATWGDLRYSINTMLSFGLFGMPMIGADICGFNGNTTEELCGRWIQLGAFYPFSRDHSAIFTVRRELYLWPSVAASGRKALGLRYQLLPYFYTLMYEAHMTGAPIARPLFFSYPHDVATYGVDRQFLLGRGVLVSPVLEPGPTTVDAYFPAGRWYRLYDYSLAVATRTGKHVRLPAPADTVNVHLTGGTILPLQQSALTTSRARRTAFHLLVALAEDGTASGYLFLDDGDSPEYGRRSDWSMVRFNYKIPNNKGAIKVKSEVVHNSYAQSRTLVISKVVLMGHRSPAAPKKLTVHVNSAEVEASSSAGTRYQNAGGLGGVAHIGGLSLVVGEEFELKVAMSY.

Residues 1-23 form the signal peptide; that stretch reads MATVGVLLLCLCLCLFAPRLCSS. The interval 89–115 is disordered; that stretch reads VPQDIIPRPAPGDVLHDAPPASSAPLQ. Residues Asn191, Asn298, Asn338, and Asn391 are each glycosylated (N-linked (GlcNAc...) asparagine). Active-site residues include Asp437 and Glu440. N-linked (GlcNAc...) asparagine glycosylation occurs at Asn471. Asp534 serves as the catalytic Proton donor. N-linked (GlcNAc...) asparagine glycosylation occurs at Asn570.

This sequence belongs to the glycosyl hydrolase 31 family. High levels seen in the aleurone and scutellum after germination, while low levels are found in developing seeds.

The catalysed reaction is Hydrolysis of terminal, non-reducing (1-&gt;4)-linked alpha-D-glucose residues with release of alpha-D-glucose.. The protein is Alpha-glucosidase of Hordeum vulgare (Barley).